Here is a 408-residue protein sequence, read N- to C-terminus: Putative mannan endo-1,4-beta-mannosidase P (408 aa).

Positions 1–23 are cleaved as a signal peptide; that stretch reads MKCLCFIVLLAIVIAQSYVGVEA. Residue asparagine 73 is glycosylated (N-linked (GlcNAc...) asparagine). Positions 85 and 201 each coordinate substrate. Glutamate 202 functions as the Proton donor in the catalytic mechanism. The active-site Nucleophile is glutamate 322. Tryptophan 364 is a substrate binding site.

It belongs to the glycosyl hydrolase 5 (cellulase A) family.

The protein resides in the secreted. The catalysed reaction is Random hydrolysis of (1-&gt;4)-beta-D-mannosidic linkages in mannans, galactomannans and glucomannans.. This is Putative mannan endo-1,4-beta-mannosidase P (MANP) from Arabidopsis thaliana (Mouse-ear cress).